A 361-amino-acid chain; its full sequence is Homeobox protein knotted-1-like 6 (361 aa).

Residues 11–48 form a disordered region; it reads VGASGVHGGHQHQHHHHPWGSSLSAIVAPPPPPQLQQQ. The span at 19–28 shows a compositional bias: basic residues; it reads GHQHQHHHHP. Residues 242–262 form the ELK domain; it reads ELKHHLLKKYSGYLSSLKQEL. A DNA-binding region (homeobox; TALE-type) is located at residues 263 to 326; it reads SKKKKKGKLP…NQRKRHWKPS (64 aa).

Belongs to the TALE/KNOX homeobox family. Interacts with FTIP7. Expressed predominantly in shoot apices. Also found to a lesser extent in glumes.

Its subcellular location is the nucleus. The protein localises to the cytoplasm. Functionally, transcription factor that regulates genes involved in development. May be involved in shoot formation during embryogenesis. Overexpression in transgenic plants causes altered leaf morphology. Regulates anther dehiscence via direct repression of the auxin biosynthetic gene YUCCA4. Binds to the DNA sequence 5'-TGAC-3' in the promoter of the YUCCA4 gene and represses its activity during anther development. Reduction of auxin levels at late stage of anther development, after meiosis of microspore mother cells, is necessary for normal anther dehiscence and seed setting. This chain is Homeobox protein knotted-1-like 6 (OSH1), found in Oryza sativa subsp. japonica (Rice).